A 357-amino-acid chain; its full sequence is GDP-mannose transporter 2 (357 aa).

Over 1–33 (MASARNGVSKDELLPVYERRSQRDGDISGSVKS) the chain is Cytoplasmic. Residues 34–54 (FASTIGNSASAAVLAYCLSSI) form a helical membrane-spanning segment. Topologically, residues 55-68 (SMTLVNKYVVSGAS) are lumenal. A helical transmembrane segment spans residues 69–89 (WNLSFLYLAMQSFIGTVAILA). The Cytoplasmic segment spans residues 90–107 (CKKTGLIQNLALFDLKKA). The chain crosses the membrane as a helical span at residues 108–128 (QTWLPISLLLVGMIYTGNKAL). Residue Q129 is a topological domain, lumenal. Residues 130–150 (FLSVPVYTIFKNLTIIVIAYG) form a helical membrane-spanning segment. Residues 151-161 (EVLMVGGGVKP) are Cytoplasmic-facing. Residues 162–181 (LALLSFGLMVLSSVVAAWAD) form a helical membrane-spanning segment. Topologically, residues 182–196 (IQNATTATVGASSDS) are lumenal. N184 carries an N-linked (GlcNAc...) asparagine glycan. The chain crosses the membrane as a helical span at residues 197–217 (TAAALSALNAGYAWMGTNVIF). Residues 218–236 (SASYALGMRRVIKKTNFDN) are Cytoplasmic-facing. The chain crosses the membrane as a helical span at residues 237–257 (WDVMFYNNLLSIPILLLASVL). Residues 258–277 (AEDWSSENLQRNFPAELRQS) lie on the Lumenal side of the membrane. The helical transmembrane segment at 278 to 298 (LFIGILYSGVAAVFISYCTAW) threads the bilayer. At 299–306 (CVRATSST) the chain is on the cytoplasmic side. A helical membrane pass occupies residues 307–327 (TYAMVGALNKLPLAVAGIVFF). The Lumenal portion of the chain corresponds to 328–332 (AAPVT). A helical membrane pass occupies residues 333 to 352 (FGSVSAIVLGFISGLVYARA). Topologically, residues 353–357 (KSTGA) are cytoplasmic.

The protein belongs to the TPT transporter family. SLC35D subfamily. As to quaternary structure, homooligomer.

Its subcellular location is the golgi apparatus membrane. It is found in the cytoplasmic vesicle membrane. It localises to the endoplasmic reticulum membrane. In terms of biological role, involved in the import of GDP-mannose from the cytoplasm into the Golgi lumen. This Neosartorya fischeri (strain ATCC 1020 / DSM 3700 / CBS 544.65 / FGSC A1164 / JCM 1740 / NRRL 181 / WB 181) (Aspergillus fischerianus) protein is GDP-mannose transporter 2 (gmt2).